The following is a 609-amino-acid chain: Zinc metalloproteinase-disintegrin-like VMP-III (609 aa).

A signal peptide spans 1–20 (MIQVLLVTICLAAFPYQGSS). The propeptide occupies 21–189 (IILESGNVND…KKASQLVVTA (169 aa)). The Peptidase M12B domain maps to 198–393 (RFVELFLVVD…HNPECILNEP (196 aa)). Ca(2+)-binding residues include Glu201 and Asp285. Disulfide bonds link Cys308–Cys388, Cys348–Cys372, and Cys350–Cys355. His333 contributes to the Zn(2+) binding site. Glu334 is a catalytic residue. 2 residues coordinate Zn(2+): His337 and His343. N-linked (GlcNAc...) asparagine glycosylation occurs at Asn371. Ca(2+)-binding residues include Cys388, Asn391, Val403, Asn406, Leu408, Glu410, Glu413, and Asp416. Positions 401 to 487 (PPVCGNELLE…ECPADVFHKN (87 aa)) constitute a Disintegrin domain. 14 disulfide bridges follow: Cys404/Cys433, Cys415/Cys428, Cys417/Cys423, Cys427/Cys450, Cys441/Cys447, Cys446/Cys472, Cys459/Cys479, Cys466/Cys498, Cys491/Cys503, Cys510/Cys560, Cys525/Cys571, Cys538/Cys548, Cys555/Cys597, and Cys591/Cys602. The D/ECD-tripeptide signature appears at 465-467 (ECD). Residues Asp467, Pro468, Glu470, Asp482, and Val483 each coordinate Ca(2+).

This sequence belongs to the venom metalloproteinase (M12B) family. P-III subfamily. P-IIIa sub-subfamily. Monomer. Zn(2+) is required as a cofactor. As to expression, expressed by the venom gland.

The protein localises to the secreted. Functionally, snake venom metalloproteinase that impairs hemostasis in the envenomed animal. This Crotalus viridis viridis (Prairie rattlesnake) protein is Zinc metalloproteinase-disintegrin-like VMP-III.